The sequence spans 616 residues: Adenylosuccinate synthetase 1 (616 aa).

The disordered stretch occupies residues 1-27 (MDKQAERGQSAGPVKTPQGTQPPAHNY). Residues 17-27 (PQGTQPPAHNY) show a composition bias toward polar residues. Residues 87 to 93 (GDEGKGK) and 117 to 119 (GHT) contribute to the GTP site. D88 serves as the catalytic Proton acceptor. Residues D88 and G117 each coordinate Mg(2+). IMP contacts are provided by residues 88-91 (DEGK), 115-118 (NAGH), T202, K216, Q328, T343, and K472. H118 acts as the Proton donor in catalysis. Residue 468–474 (AVTKKPR) coordinates substrate. Residues R474 and 603–605 (GNG) each bind GTP.

Belongs to the adenylosuccinate synthetase family. In terms of assembly, homodimer. Requires Mg(2+) as cofactor.

The protein resides in the cytoplasm. The catalysed reaction is IMP + L-aspartate + GTP = N(6)-(1,2-dicarboxyethyl)-AMP + GDP + phosphate + 2 H(+). It functions in the pathway purine metabolism; AMP biosynthesis via de novo pathway; AMP from IMP: step 1/2. Plays an important role in the salvage pathway for purine nucleotide biosynthesis. Catalyzes the first committed step in the biosynthesis of AMP from IMP. The polypeptide is Adenylosuccinate synthetase 1 (Trypanosoma cruzi (strain CL Brener)).